A 228-amino-acid polypeptide reads, in one-letter code: A-type ATP synthase subunit D (228 aa).

Residues 205 to 214 (KKEEEEKAEA) show a composition bias toward basic and acidic residues. Residues 205–228 (KKEEEEKAEAAAEAAAVEDPEPAD) are disordered.

This sequence belongs to the V-ATPase D subunit family. As to quaternary structure, has multiple subunits with at least A(3), B(3), C, D, E, F, H, I and proteolipid K(x).

Its subcellular location is the cell membrane. In terms of biological role, component of the A-type ATP synthase that produces ATP from ADP in the presence of a proton gradient across the membrane. The chain is A-type ATP synthase subunit D from Halorubrum lacusprofundi (strain ATCC 49239 / DSM 5036 / JCM 8891 / ACAM 34).